The primary structure comprises 48 residues: Sperm protamine R3 isoform 2 (48 aa).

Over residues 1–29 (ARRRHSMKKKRKSVRRRKTRKNQRKRKNS) the composition is skewed to basic residues. The disordered stretch occupies residues 1–48 (ARRRHSMKKKRKSVRRRKTRKNQRKRKNSLGRSFKAHGFLKQPPRFRP).

Testis.

It is found in the nucleus. The protein resides in the chromosome. In terms of biological role, protamines substitute for histones in the chromatin of sperm during the haploid phase of spermatogenesis. They compact sperm DNA into a highly condensed, stable and inactive complex. In Hydrolagus colliei (Spotted ratfish), this protein is Sperm protamine R3 isoform 2.